Consider the following 312-residue polypeptide: Glyoxylate/hydroxypyruvate reductase A (312 aa).

Arg227 is an active-site residue. His275 serves as the catalytic Proton donor.

This sequence belongs to the D-isomer specific 2-hydroxyacid dehydrogenase family. GhrA subfamily.

Its subcellular location is the cytoplasm. The enzyme catalyses glycolate + NADP(+) = glyoxylate + NADPH + H(+). It carries out the reaction (R)-glycerate + NAD(+) = 3-hydroxypyruvate + NADH + H(+). The catalysed reaction is (R)-glycerate + NADP(+) = 3-hydroxypyruvate + NADPH + H(+). Its function is as follows. Catalyzes the NADPH-dependent reduction of glyoxylate and hydroxypyruvate into glycolate and glycerate, respectively. The sequence is that of Glyoxylate/hydroxypyruvate reductase A from Escherichia coli O6:K15:H31 (strain 536 / UPEC).